The sequence spans 177 residues: Large ribosomal subunit protein bL9 (177 aa).

Residues 151-177 are disordered; that stretch reads EDEEIAEAAPVAEAQAEADGHSTEETA. Over residues 157–167 the composition is skewed to low complexity; the sequence is EAAPVAEAQAE. Residues 168–177 are compositionally biased toward basic and acidic residues; sequence ADGHSTEETA.

Belongs to the bacterial ribosomal protein bL9 family.

In terms of biological role, binds to the 23S rRNA. The sequence is that of Large ribosomal subunit protein bL9 from Solidesulfovibrio magneticus (strain ATCC 700980 / DSM 13731 / RS-1) (Desulfovibrio magneticus).